The chain runs to 550 residues: Zinc finger protein 426 (550 aa).

A KRAB domain is found at 39 to 110 (VSFEDVIVDF…KIVFPEWKLQ (72 aa)). 11 consecutive C2H2-type zinc fingers follow at residues 219–241 (FECSDCGKSFMSQSHLQTHQRTH), 274–296 (HRCKECGKGYRYPAYLNIHMRTH), 302–324 (YECKECGKAFNYSNSFQIHGRTH), 330–352 (YVCSQCGKAFTQHSGLSIHVRSH), 358–380 (YGCKECGKAFLTSSRLIQHIRTH), 386–408 (FVCVKCGKAFAISSNLNGHLKLH), 414–436 (CECKICGKAFGYLSCLNNHMRTH), 442–464 (YTCKECGKAFNYSTHLKIHMRIH), 470–492 (YECKQCGKAFSHSTSFQIHERTH), 498–522 (YECKECGKAFICPSSFRIHEISHTH), and 528–550 (YKCQQCGKAYSHPRSLRRHERIH).

The protein localises to the nucleus. Its function is as follows. May be involved in transcriptional regulation. This Mus musculus (Mouse) protein is Zinc finger protein 426 (Znf426).